The primary structure comprises 188 residues: Pyridoxal 5'-phosphate synthase subunit PdxT (188 aa).

An L-glutamine-binding site is contributed by 46–48 (GES). Catalysis depends on C78, which acts as the Nucleophile. L-glutamine is bound by residues R105 and 134-135 (IR). Active-site charge relay system residues include H170 and E172.

This sequence belongs to the glutaminase PdxT/SNO family. In terms of assembly, in the presence of PdxS, forms a dodecamer of heterodimers. Only shows activity in the heterodimer.

The catalysed reaction is aldehydo-D-ribose 5-phosphate + D-glyceraldehyde 3-phosphate + L-glutamine = pyridoxal 5'-phosphate + L-glutamate + phosphate + 3 H2O + H(+). It carries out the reaction L-glutamine + H2O = L-glutamate + NH4(+). Its pathway is cofactor biosynthesis; pyridoxal 5'-phosphate biosynthesis. Catalyzes the hydrolysis of glutamine to glutamate and ammonia as part of the biosynthesis of pyridoxal 5'-phosphate. The resulting ammonia molecule is channeled to the active site of PdxS. This Thermotoga petrophila (strain ATCC BAA-488 / DSM 13995 / JCM 10881 / RKU-1) protein is Pyridoxal 5'-phosphate synthase subunit PdxT.